The primary structure comprises 186 residues: MSFLTNFLLGLGLSMDAFAVSMSSSTTIRPFHQKDALKLAVFFGGFQAFMPVLGWLGGSAVSGFVSNYASWIAFGLLTFIGGKMIYEALYGDPDGKINSLNYSVLLMLAIATSIDALAVGISFAFLNTPILEPVIIIGCVTFVMSFCGAVLGHRIGHFFEHEVEIIGGLILIGIGGKILAEHLLWI.

The next 6 membrane-spanning stretches (helical) occupy residues 1 to 21 (MSFL…FAVS), 41 to 61 (VFFG…GSAV), 71 to 91 (WIAF…ALYG), 105 to 125 (LLML…SFAF), 130 to 150 (ILEP…CGAV), and 165 to 185 (IIGG…HLLW).

It belongs to the MntP (TC 9.B.29) family.

It localises to the cell membrane. Probably functions as a manganese efflux pump. The polypeptide is Putative manganese efflux pump MntP (Methanosarcina barkeri (strain Fusaro / DSM 804)).